Here is a 159-residue protein sequence, read N- to C-terminus: Serine-protein kinase RsbW (159 aa).

It belongs to the anti-sigma-factor family.

The catalysed reaction is L-seryl-[protein] + ATP = O-phospho-L-seryl-[protein] + ADP + H(+). It catalyses the reaction L-threonyl-[protein] + ATP = O-phospho-L-threonyl-[protein] + ADP + H(+). Negative regulator of sigma-B activity. Phosphorylates and inactivates its specific antagonist protein, RsbV. Upon phosphorylation of RsbV, RsbW is released and binds to sigma-B, thereby blocking its ability to form an RNA polymerase holoenzyme (E-sigma-B). The sequence is that of Serine-protein kinase RsbW from Staphylococcus aureus.